Consider the following 244-residue polypeptide: 14-3-3 protein homolog 1 (244 aa).

Belongs to the 14-3-3 family.

The chain is 14-3-3 protein homolog 1 from Echinococcus multilocularis (Fox tapeworm).